The sequence spans 251 residues: MLITDTLSPQAFEEALRAKGAFYHIHHPYHIAMHNGEATREQIQGWVANRFYYQTTIPLKDAAIMANCPDAQTRRKWVQRILDHDGSHGEDGGIEAWLRLGEAVGLSRDDLLSERHVLPGVRFAVDAYLNFARRACWQEAACSSLTELFAPQIHQSRLDSWPQHYPWIKEEGYFYFRSRLSQANRDVEHGLALAKTYCDSAEKQNRMLEILQFKLDILWSMLDAMTMAYALQRPPYHTVTDKAAWHTTRLV.

It belongs to the PqqC family.

It catalyses the reaction 6-(2-amino-2-carboxyethyl)-7,8-dioxo-1,2,3,4,7,8-hexahydroquinoline-2,4-dicarboxylate + 3 O2 = pyrroloquinoline quinone + 2 H2O2 + 2 H2O + H(+). Its pathway is cofactor biosynthesis; pyrroloquinoline quinone biosynthesis. Its function is as follows. Ring cyclization and eight-electron oxidation of 3a-(2-amino-2-carboxyethyl)-4,5-dioxo-4,5,6,7,8,9-hexahydroquinoline-7,9-dicarboxylic-acid to PQQ. This Klebsiella pneumoniae (strain 342) protein is Pyrroloquinoline-quinone synthase.